A 201-amino-acid chain; its full sequence is MSRYRGPRFKKIRRLGALPGLTNKKPRAGNDLRNQLRSGKKSQYRIRLEEKQKLRFHYGLTERQLLKYVRIAGKAKGSTGQVLLQLLEMRLDNILFRLGMASTIPAARQLVNHRHILVNGRIVDIPSYRCKPRDIITGKDEQKSRALIQKSLDSSPQEELPSHLTLHPFQYKGLVNQIIDSKWVGLKINELLVVEYYSRQT.

The region spanning 89–149 (MRLDNILFRL…DEQKSRALIQ (61 aa)) is the S4 RNA-binding domain.

It belongs to the universal ribosomal protein uS4 family. Part of the 30S ribosomal subunit. Contacts protein S5. The interaction surface between S4 and S5 is involved in control of translational fidelity.

It localises to the plastid. The protein resides in the chloroplast. In terms of biological role, one of the primary rRNA binding proteins, it binds directly to 16S rRNA where it nucleates assembly of the body of the 30S subunit. With S5 and S12 plays an important role in translational accuracy. The protein is Small ribosomal subunit protein uS4c (rps4) of Coffea arabica (Arabian coffee).